A 924-amino-acid chain; its full sequence is TBC1 domain family member 30 (924 aa).

The segment covering 1–11 has biased composition (gly residues); sequence MDVLPTGGGRP. Disordered stretches follow at residues 1-76 and 94-134; these read MDVL…GRTS and EEEE…RSGA. The segment covering 47–59 has biased composition (basic and acidic residues); that stretch reads GAAERPRRSRDTW. Positions 249 to 457 constitute a Rab-GAP TBC domain; that stretch reads GIPKEWRRKV…KIWDSVFFEG (209 aa). Disordered regions lie at residues 541–564, 776–806, and 838–924; these read KPTSVSGRHSKARDSDEENDPDDE, GCTATAGREGSSPEGSTRRTIEGQSPEPVFG, and HPPC…TKKR. The segment covering 555 to 564 has biased composition (acidic residues); that stretch reads SDEENDPDDE. Position 800 is a phosphoserine (Ser800). Residues 858 to 870 are compositionally biased toward polar residues; that stretch reads TSKAPQGSNSKTP. A compositionally biased stretch (gly residues) spans 914–924; it reads PGGGNSGTKKR.

The protein localises to the cell membrane. Functionally, may act as a GTPase-activating protein for Rab family protein(s). This chain is TBC1 domain family member 30 (TBC1D30), found in Homo sapiens (Human).